Here is a 227-residue protein sequence, read N- to C-terminus: UPF0758 protein Spro_4842 (227 aa).

The region spanning 105–227 (AMLNPRMTQH…CVSFAERGWL (123 aa)) is the MPN domain. The Zn(2+) site is built by histidine 176, histidine 178, and aspartate 189. The JAMM motif motif lies at 176–189 (HNHPSGKAEPSHAD).

This sequence belongs to the UPF0758 family. YicR subfamily.

This chain is UPF0758 protein Spro_4842, found in Serratia proteamaculans (strain 568).